The sequence spans 302 residues: Sulfate adenylyltransferase subunit 2 (302 aa).

The protein belongs to the PAPS reductase family. CysD subfamily. As to quaternary structure, heterodimer composed of CysD, the smaller subunit, and CysN.

The enzyme catalyses sulfate + ATP + H(+) = adenosine 5'-phosphosulfate + diphosphate. It participates in sulfur metabolism; hydrogen sulfide biosynthesis; sulfite from sulfate: step 1/3. With CysN forms the ATP sulfurylase (ATPS) that catalyzes the adenylation of sulfate producing adenosine 5'-phosphosulfate (APS) and diphosphate, the first enzymatic step in sulfur assimilation pathway. APS synthesis involves the formation of a high-energy phosphoric-sulfuric acid anhydride bond driven by GTP hydrolysis by CysN coupled to ATP hydrolysis by CysD. The polypeptide is Sulfate adenylyltransferase subunit 2 (Escherichia coli O81 (strain ED1a)).